Reading from the N-terminus, the 330-residue chain is Nuclear apoptosis-inducing factor 1 (330 aa).

Positions 1-74 (MASPPAPPAK…CHRELPEVKK (74 aa)) are required for nuclear localization and apoptosis-inducing activity. Disordered regions lie at residues 92–117 (AAME…TGAT), 147–175 (CGAG…AAPS), and 309–330 (NTPS…GIIQ). Residues 95-108 (EGGGESQNGGGAGT) are compositionally biased toward gly residues.

The protein belongs to the NAIF1 family.

The protein localises to the nucleus. Functionally, induces apoptosis. This is Nuclear apoptosis-inducing factor 1 (NAIF1) from Gallus gallus (Chicken).